The chain runs to 32 residues: MILGAVFYIVFIALFFGIAVGIIFAIKSIKLI.

Residues 6–26 (VFYIVFIALFFGIAVGIIFAI) form a helical membrane-spanning segment.

It belongs to the PetL family. The 4 large subunits of the cytochrome b6-f complex are cytochrome b6, subunit IV (17 kDa polypeptide, PetD), cytochrome f and the Rieske protein, while the 4 small subunits are PetG, PetL, PetM and PetN. The complex functions as a dimer.

The protein localises to the cellular thylakoid membrane. Functionally, component of the cytochrome b6-f complex, which mediates electron transfer between photosystem II (PSII) and photosystem I (PSI), cyclic electron flow around PSI, and state transitions. PetL is important for photoautotrophic growth as well as for electron transfer efficiency and stability of the cytochrome b6-f complex. This is Cytochrome b6-f complex subunit 6 from Mastigocladus laminosus (Fischerella sp.).